Reading from the N-terminus, the 1366-residue chain is DNA-directed RNA polymerase subunit beta (1366 aa).

The protein belongs to the RNA polymerase beta chain family. As to quaternary structure, the RNAP catalytic core consists of 2 alpha, 1 beta, 1 beta' and 1 omega subunit. When a sigma factor is associated with the core the holoenzyme is formed, which can initiate transcription.

The catalysed reaction is RNA(n) + a ribonucleoside 5'-triphosphate = RNA(n+1) + diphosphate. Its function is as follows. DNA-dependent RNA polymerase catalyzes the transcription of DNA into RNA using the four ribonucleoside triphosphates as substrates. The polypeptide is DNA-directed RNA polymerase subunit beta (Marinomonas sp. (strain MWYL1)).